The chain runs to 538 residues: Phosphoenolpyruvate carboxykinase (ATP) (538 aa).

Arginine 61, tyrosine 195, and lysine 201 together coordinate substrate. Residues lysine 201, histidine 220, and 236–244 (GLSGTGKTT) contribute to the ATP site. 2 residues coordinate Mn(2+): lysine 201 and histidine 220. A Mn(2+)-binding site is contributed by aspartate 257. 3 residues coordinate ATP: glutamate 285, arginine 323, and threonine 449. Position 323 (arginine 323) interacts with substrate.

The protein belongs to the phosphoenolpyruvate carboxykinase (ATP) family. It depends on Mn(2+) as a cofactor.

It localises to the cytoplasm. The enzyme catalyses oxaloacetate + ATP = phosphoenolpyruvate + ADP + CO2. The protein operates within carbohydrate biosynthesis; gluconeogenesis. Involved in the gluconeogenesis. Catalyzes the conversion of oxaloacetate (OAA) to phosphoenolpyruvate (PEP) through direct phosphoryl transfer between the nucleoside triphosphate and OAA. The sequence is that of Phosphoenolpyruvate carboxykinase (ATP) from Afipia carboxidovorans (strain ATCC 49405 / DSM 1227 / KCTC 32145 / OM5) (Oligotropha carboxidovorans).